A 31-amino-acid polypeptide reads, in one-letter code: Cliotide T13 (31 aa).

Positions 1–31 (DTTPCGESCVWIPCVSSIVGCSCQNKVCYQN) form a cross-link, cyclopeptide (Asp-Asn). 3 disulfides stabilise this stretch: cysteine 5-cysteine 21, cysteine 9-cysteine 23, and cysteine 14-cysteine 28.

Post-translationally, contains 3 disulfide bonds. In terms of processing, this is a cyclic peptide. As to expression, expressed in seed but not in root nodules.

Probably participates in a plant defense mechanism. Not active against Gram-negative bacterium E.coli ATCC 700926 or Gram-positive bacterium S.aureus ATCC 12600 up to a concentration of 100 uM under low-salt conditions. The polypeptide is Cliotide T13 (Clitoria ternatea (Butterfly pea)).